Here is a 376-residue protein sequence, read N- to C-terminus: Polygalacturonase (376 aa).

The signal sequence occupies residues 1-20 (MASSLKLGLIALLGATAVNA). A disulfide bond links Cys39 and Cys57. Residues 170–208 (AKELTLSGITVDTADGDSNGGHNTDAFDVGSSNGVYITS) form a PbH1 1 repeat. Residue Asp215 is the Proton donor of the active site. Residues Cys217 and Cys233 are joined by a disulfide bond. 4 PbH1 repeats span residues 223 to 243 (GTNVHFTGAQCTGGHGISIGS), 252 to 273 (VDGVTVESCTIKDSDNGVRIKT), 281 to 303 (VQGVTYKDITLSGIAKYGIVIEQ), and 315 to 360 (TSGV…SITG). The active site involves His237. Cystine bridges form between Cys343–Cys348 and Cys367–Cys376.

It belongs to the glycosyl hydrolase 28 family.

Its subcellular location is the secreted. The enzyme catalyses (1,4-alpha-D-galacturonosyl)n+m + H2O = (1,4-alpha-D-galacturonosyl)n + (1,4-alpha-D-galacturonosyl)m.. This is Polygalacturonase (PGG1) from Penicillium griseoroseum.